A 210-amino-acid polypeptide reads, in one-letter code: Thymidylate kinase (210 aa).

D17 contributes to the dGMP binding site. Residue D17 coordinates dTMP. ATP contacts are provided by R18, S19, G20, K21, S22, and T23. R47, F74, R78, R99, and Y107 together coordinate dTMP. 6 residues coordinate dGMP: F74, R78, R99, Y107, S108, and Y153. The interval 143-155 (QNRSDYGEEIYEK) is LID. R182 provides a ligand contact to ATP.

The protein belongs to the thymidylate kinase family. In terms of assembly, homodimer. Binds two dTMP molecules per dimer. Binds only one dTGP molecule per dimer.

The catalysed reaction is dTMP + ATP = dTDP + ADP. It catalyses the reaction dGMP + ATP = dGDP + ADP. Its pathway is pyrimidine metabolism; dTTP biosynthesis. Inhibited by deoxyguanosine (dG), deoxythymidine (dT) and azidothymidine (AZT). Its function is as follows. Catalyzes the phosphorylation of thymidine monophosphate (dTMP) to thymidine diphosphate (dTDP), the immediate precursor for the DNA building block dTTP. Can also phosphorylate dGMP and to a lesser extent GMP, dUMP and dIMP. Can use either ATP or dATP as phosphate donors in presence of Mg(2+). This is Thymidylate kinase from Plasmodium falciparum (isolate 3D7).